The chain runs to 68 residues: Conotoxin Vc7.3 (68 aa).

A signal peptide spans methionine 1–alanine 24. The propeptide occupies valine 25–arginine 45. 3 disulfides stabilise this stretch: cysteine 47–cysteine 55, cysteine 50–cysteine 60, and cysteine 54–cysteine 65.

This sequence belongs to the conotoxin U superfamily. As to expression, expressed by the venom duct.

It is found in the secreted. The sequence is that of Conotoxin Vc7.3 from Conus victoriae (Queen Victoria cone).